Reading from the N-terminus, the 1055-residue chain is Endo-1,4-beta-xylanase A (1055 aa).

The N-terminal stretch at 1–29 (MRKKRRGFLNASTAVLVGILAGFLGVVLA) is a signal peptide. The a stretch occupies residues 30–357 (ATGALGFAVR…TTSAEIKLEM (328 aa)). Residues 360–688 (EEEIPALKDV…KLAYWAIVAP (329 aa)) enclose the GH10 domain. The active-site Proton donor is the glutamate 498. The active-site Nucleophile is the glutamate 604. 2 consecutive CBM-cenC domains span residues 720–851 (PIEI…TNSQ) and 895–1040 (KSVA…PTNN).

The protein belongs to the glycosyl hydrolase 10 (cellulase F) family.

The catalysed reaction is Endohydrolysis of (1-&gt;4)-beta-D-xylosidic linkages in xylans.. The protein is Endo-1,4-beta-xylanase A (xynA) of Thermotoga neapolitana.